We begin with the raw amino-acid sequence, 149 residues long: Deoxyuridine 5'-triphosphate nucleotidohydrolase (149 aa).

Substrate is bound by residues 68–70 (RSG), Asn81, 85–87 (LID), and Met95.

This sequence belongs to the dUTPase family. Mg(2+) serves as cofactor.

It catalyses the reaction dUTP + H2O = dUMP + diphosphate + H(+). It participates in pyrimidine metabolism; dUMP biosynthesis; dUMP from dCTP (dUTP route): step 2/2. Its function is as follows. This enzyme is involved in nucleotide metabolism: it produces dUMP, the immediate precursor of thymidine nucleotides and it decreases the intracellular concentration of dUTP so that uracil cannot be incorporated into DNA. This chain is Deoxyuridine 5'-triphosphate nucleotidohydrolase, found in Methylibium petroleiphilum (strain ATCC BAA-1232 / LMG 22953 / PM1).